A 128-amino-acid chain; its full sequence is Probable 4-amino-4-deoxy-L-arabinose-phosphoundecaprenol flippase subunit ArnF (128 aa).

Residues 1 to 2 (MG) are Cytoplasmic-facing. The helical transmembrane segment at 3 to 23 (LMWGLFSVIIASVAQLSLGFA) threads the bilayer. Topologically, residues 24–35 (ASHLPPMTHLWD) are periplasmic. Residues 36 to 56 (FIATLLAFGLDARILLLGLLG) form a helical membrane-spanning segment. At 57–77 (YLLSVFCWYKTLHKLALSKAY) the chain is on the cytoplasmic side. Residues 78-98 (ALLSMSYVLVWIASMVLPGWG) form a helical membrane-spanning segment. The Periplasmic portion of the chain corresponds to 99–100 (GT). Residues 101–121 (FSLKALLGVACIMSGLMLIFL) form a helical membrane-spanning segment. The Cytoplasmic portion of the chain corresponds to 122 to 128 (PTTKQRY).

It belongs to the ArnF family. As to quaternary structure, heterodimer of ArnE and ArnF.

Its subcellular location is the cell inner membrane. It functions in the pathway bacterial outer membrane biogenesis; lipopolysaccharide biosynthesis. Translocates 4-amino-4-deoxy-L-arabinose-phosphoundecaprenol (alpha-L-Ara4N-phosphoundecaprenol) from the cytoplasmic to the periplasmic side of the inner membrane. The protein is Probable 4-amino-4-deoxy-L-arabinose-phosphoundecaprenol flippase subunit ArnF of Shigella dysenteriae serotype 1 (strain Sd197).